We begin with the raw amino-acid sequence, 376 residues long: Homoserine dehydrogenase (376 aa).

Residues Asn17 and Ile18 each contribute to the NADP(+) site. Residue Ile18 coordinates NAD(+). NADPH contacts are provided by Ile18, Lys67, Thr99, and Lys123. Thr99 and Lys123 together coordinate NADP(+). Thr99 is an NAD(+) binding site. Positions 150, 153, 155, and 157 each coordinate Na(+). At Ser201 the chain carries Phosphoserine. The NADP(+) site is built by Gly213 and Glu216. L-homoserine is bound by residues Glu216 and Asp227. The Proton donor role is filled by Lys231. Gly349 lines the NADP(+) pocket. Gly349 serves as a coordination point for NAD(+). Gly349 serves as a coordination point for NADPH.

It belongs to the homoserine dehydrogenase family. The cofactor is a metal cation.

It catalyses the reaction L-homoserine + NADP(+) = L-aspartate 4-semialdehyde + NADPH + H(+). It carries out the reaction L-homoserine + NAD(+) = L-aspartate 4-semialdehyde + NADH + H(+). It participates in amino-acid biosynthesis; L-methionine biosynthesis via de novo pathway; L-homoserine from L-aspartate: step 3/3. The protein operates within amino-acid biosynthesis; L-threonine biosynthesis; L-threonine from L-aspartate: step 3/5. In terms of biological role, catalyzes the conversion of L-aspartate-beta-semialdehyde (L-Asa) to L-homoserine (L-Hse), the third step in the biosynthesis of amino acids that derive from aspartate (the aspartate family of amino acids), including methioinine and threonine, the latter of which is a precursor to isoleucine; production of homoserine leads to a branch-point in the pathway as it can either be O-phosphorylated for processing to threonine, or O-acylated for processing to methionine. This is Homoserine dehydrogenase from Schizosaccharomyces pombe (strain 972 / ATCC 24843) (Fission yeast).